Reading from the N-terminus, the 286-residue chain is MKHVLSIQSHVVYGYAGNKSATFPMQLLGVDVWALNTVQFSNHTQYGKWTGMVIPKEQIGEIVRGIDAIEALHLCDAIVSGYIGSAEQVEEIVNAVRFIKSKNPNALYLCDPVMGHPDKGCIVAEGVKEGLINLAMAEADLITPNLVELRELSGLPVENFAQAQDAVRAILAKGPKKVLVKHLSKVGKDSSQFEMLLATKDGMWHISRPLHQFRKEPVGVGDLTAGLFIANLLNGKSDIEAFEHTANAVNDVMTVTQQKDNYELQIIAAREYIMQPSSQYKAVKIA.

Substrate-binding positions include Ser9 and 44 to 45; that span reads TQ. ATP contacts are provided by Asp111, Glu148, and Lys181. Asp222 is a substrate binding site.

It belongs to the pyridoxine kinase family. PdxY subfamily. In terms of assembly, homodimer. Requires Mg(2+) as cofactor.

It catalyses the reaction pyridoxal + ATP = pyridoxal 5'-phosphate + ADP + H(+). Its pathway is cofactor metabolism; pyridoxal 5'-phosphate salvage; pyridoxal 5'-phosphate from pyridoxal: step 1/1. Functionally, pyridoxal kinase involved in the salvage pathway of pyridoxal 5'-phosphate (PLP). Catalyzes the phosphorylation of pyridoxal to PLP. The polypeptide is Pyridoxal kinase PdxY (Pasteurella multocida (strain Pm70)).